The primary structure comprises 429 residues: Alpha-galactosidase A (429 aa).

The signal sequence occupies residues 1 to 31 (MQLRNPELHLGCALALRFLALVSWDIPGARA). Disulfide bonds link cysteine 52–cysteine 94 and cysteine 56–cysteine 63. Residue asparagine 139 is glycosylated (N-linked (GlcNAc...) asparagine). Cysteine 142 and cysteine 172 form a disulfide bridge. The Nucleophile role is filled by aspartate 170. Residue asparagine 192 is glycosylated (N-linked (GlcNAc...) asparagine). Cysteine 202 and cysteine 223 are disulfide-bonded. 203 to 207 (EWPLY) provides a ligand contact to substrate. N-linked (GlcNAc...) asparagine glycosylation is present at asparagine 215. Aspartate 231 acts as the Proton donor in catalysis. The cysteines at positions 378 and 382 are disulfide-linked.

The protein belongs to the glycosyl hydrolase 27 family. As to quaternary structure, homodimer.

It localises to the lysosome. It catalyses the reaction Hydrolysis of terminal, non-reducing alpha-D-galactose residues in alpha-D-galactosides, including galactose oligosaccharides, galactomannans and galactolipids.. It carries out the reaction a globoside Gb3Cer (d18:1(4E)) + H2O = a beta-D-Gal-(1-&gt;4)-beta-D-Glc-(1&lt;-&gt;1)-Cer(d18:1(4E)) + D-galactose. The catalysed reaction is a globoside Gb3Cer + H2O = a beta-D-galactosyl-(1-&gt;4)-beta-D-glucosyl-(1&lt;-&gt;1)-ceramide + D-galactose. Its activity is regulated as follows. Galactosylgalactosylglucosylceramidase activity is stimulated by saposin B and ammonium chloride. In terms of biological role, catalyzes the hydrolysis of glycosphingolipids and participates in their degradation in the lysosome. The chain is Alpha-galactosidase A from Homo sapiens (Human).